The chain runs to 479 residues: Anaerobic nitric oxide reductase flavorubredoxin (479 aa).

A zinc metallo-hydrolase region spans residues 30 to 210 (LRGSSYNSYL…PFSRLVTPKI (181 aa)). Fe cation is bound by residues H79, E81, D83, H147, D166, and H227. Residues 254–393 (ITIFYDTMSN…LCRQHGRDIA (140 aa)) form the Flavodoxin-like domain. Residues 260 to 264 (TMSNN) and 342 to 369 (AFGS…EMSL) contribute to the FMN site. The region spanning 423-474 (GPKMQCSVCQWIYDPALGEPLQDVAPGTPWSDVPDNFLCPECSLGKDVFDVL) is the Rubredoxin-like domain. Residues C428, C431, C461, and C464 each coordinate Fe cation.

This sequence in the N-terminal section; belongs to the zinc metallo-hydrolase group 3 family. As to quaternary structure, homotetramer. The cofactor is Fe cation. Requires FMN as cofactor.

It is found in the cytoplasm. The protein operates within nitrogen metabolism; nitric oxide reduction. Its function is as follows. Anaerobic nitric oxide reductase; uses NADH to detoxify nitric oxide (NO), protecting several 4Fe-4S NO-sensitive enzymes. Has at least 2 reductase partners, only one of which (NorW, flavorubredoxin reductase) has been identified. NO probably binds to the di-iron center; electrons enter from the NorW at rubredoxin and are transferred sequentially to the FMN center and the di-iron center. Also able to function as an aerobic oxygen reductase. This is Anaerobic nitric oxide reductase flavorubredoxin from Salmonella typhi.